We begin with the raw amino-acid sequence, 446 residues long: D(1A) dopamine receptor (446 aa).

Residues 1–22 (MAPNTSTMDETGLPVERDFSFR) are Extracellular-facing. N4 carries an N-linked (GlcNAc...) asparagine glycan. Residues 23-48 (ILTACFLSLLILSTLLGNTLVCAAVI) traverse the membrane as a helical segment. At 49-59 (RFRHLRSKVTN) the chain is on the cytoplasmic side. Residues 60 to 86 (FFVISLAVSDLLVAVLVMPWKAVAEIA) form a helical membrane-spanning segment. The Extracellular portion of the chain corresponds to 87–95 (GFWPFGSFC). A disulfide bridge links C95 with C186. Residues 96 to 118 (NIWVAFDIMCSTASILNLCVISV) form a helical membrane-spanning segment. Topologically, residues 119-137 (DRYWAISSPFQYERKMTPK) are cytoplasmic. The chain crosses the membrane as a helical span at residues 138–162 (AAFILISVAWTLSVLISFIPVQLSW). Residues 163-192 (HKAKPTWPLDGNFTSLEDAEDDNCDTRLSR) lie on the Extracellular side of the membrane. A helical membrane pass occupies residues 193-218 (TYAISSSLISFYIPVAIMIVTYTSIY). Residues 219 to 272 (RIAQKQIRRISALERAAVHAKNCQTTTGNGNPVECSQSESSFKMSFKRETKVLK) are Cytoplasmic-facing. A helical membrane pass occupies residues 273 to 299 (TLSVIMGVFVCCWLPFFISNCMVPFCG). Residues 300 to 312 (SEETQPFCIDSIT) lie on the Extracellular side of the membrane. A helical membrane pass occupies residues 313-337 (FDVFVWFGWANSSLNPIIYAFNADF). Residues 338–446 (QKAFSTLLGC…PVTHSGQHST (109 aa)) lie on the Cytoplasmic side of the membrane. S-palmitoyl cysteine attachment occurs at residues C347 and C351. S441 bears the Phosphoserine mark.

Belongs to the G-protein coupled receptor 1 family. As to quaternary structure, interacts with DNAJC14 via its C-terminus. Interacts with DRD2. Interacts with DORIP1.

The protein resides in the cell membrane. Its subcellular location is the endoplasmic reticulum membrane. It is found in the cell projection. The protein localises to the cilium membrane. It localises to the dendrite. The protein resides in the dendritic spine. Its function is as follows. Dopamine receptor whose activity is mediated by G proteins which activate adenylyl cyclase. This chain is D(1A) dopamine receptor (Drd1), found in Mus musculus (Mouse).